Reading from the N-terminus, the 202-residue chain is Phospholipase A2 inhibitor gamma subunit A (202 aa).

An N-terminal signal peptide occupies residues 1 to 19 (MKSLQIICLLFIFVARGSC). Intrachain disulfides connect cysteine 22–cysteine 47, cysteine 25–cysteine 32, cysteine 40–cysteine 68, cysteine 74–cysteine 95, cysteine 96–cysteine 101, cysteine 119–cysteine 144, cysteine 137–cysteine 166, and cysteine 170–cysteine 192.

It belongs to the CNF-like-inhibitor family. In terms of assembly, heteromer composed of subunit A and subunit B. Expressed by the liver.

Its subcellular location is the secreted. In terms of biological role, inhibits the enzymatic activity of the phospholipase A2 (PLA2). This Elaphe climacophora (Japanese rat snake) protein is Phospholipase A2 inhibitor gamma subunit A.